We begin with the raw amino-acid sequence, 330 residues long: T-cell surface glycoprotein CD1b4 (330 aa).

An N-terminal signal peptide occupies residues 1–15 (MLLLALAFFFPAGDT). The Extracellular segment spans residues 16–299 (QNVLPGKISF…LYWGHSISIG (284 aa)). N35, N72, and N143 each carry an N-linked (GlcNAc...) asparagine glycan. Disulfide bonds link C117–C181 and C221–C276. One can recognise an Ig-like domain in the interval 182-292 (PRYLMSVIEA…LEGQDIILYW (111 aa)). Residues 300–320 (WIILAVLVPCLIVLVLFILWF) traverse the membrane as a helical segment. The Cytoplasmic segment spans residues 321–330 (YRRWSYEDIF). The Internalization signal signature appears at 326-329 (YEDI).

As to quaternary structure, heterodimer with B2M (beta-2-microglobulin). Interacts with saposin C.

It localises to the cell membrane. Its subcellular location is the endosome membrane. The protein resides in the lysosome membrane. Functionally, antigen-presenting protein that binds self and non-self lipid and glycolipid antigens and presents them to T-cell receptors on natural killer T-cells. This chain is T-cell surface glycoprotein CD1b4 (CD1B4), found in Cavia porcellus (Guinea pig).